A 266-amino-acid chain; its full sequence is MHPILNIAIRVARKCGNILIQYYDRNKTNNEKQILKKDFITKIIFVLEKTMIDMIHKSYPEHSIITYHKNNKIFKNTEIIWLINALDGIKNFENNLPHFCISIAIIVRKTTQISVIYDPIRNELFTSVKGQGSQLNGYRMRCKSTNTLKRSLVGLVYPCNNSKFQNYFFTIINLLFSHEVKLRCTGCISLDCAYVAMGRLDYLFNGNLIPLLFSSGSLQIKESGGLISDLNGGHDYVSSGIILIGNPKLMRVILVKIRELFQNNLK.

Position 86–89 (86–89) interacts with substrate; sequence LDGI.

It belongs to the inositol monophosphatase superfamily. In terms of assembly, homodimer. The rRNA transcription and antitermination complex (rrnTAC) consists of RNA polymerase (RNAP), NusA, NusB, NusE (rpsJ), NusG, SubB, ribosomal protein S4, DNA and precursor rRNA; S4 is more flexible than other subunits. Mg(2+) is required as a cofactor.

The protein resides in the cytoplasm. It catalyses the reaction a myo-inositol phosphate + H2O = myo-inositol + phosphate. Part of the processive rRNA transcription and antitermination complex (rrnTAC). The complex forms an RNA-chaperone ring around the RNA exit tunnel of RNA polymerase (RNAP). It supports rapid transcription and antitermination of rRNA operons, cotranscriptional rRNA folding, and annealing of distal rRNA regions to allow correct ribosome biogenesis. This subunit may play a central role in organizing the structure. This is Nus factor SuhB (suhB) from Buchnera aphidicola subsp. Baizongia pistaciae (strain Bp).